Reading from the N-terminus, the 510-residue chain is Zinc finger and SCAN domain-containing protein 18 (510 aa).

The tract at residues Met-1–Arg-40 is disordered. An SCAN box domain is found at Arg-49 to Leu-131. 4 disordered regions span residues Ala-172 to Pro-191, Glu-201 to His-231, Thr-263 to Tyr-413, and Lys-461 to Arg-510. 2 stretches are compositionally biased toward basic and acidic residues: residues Gln-214–His-231 and Thr-263–Pro-273. Low complexity predominate over residues Ala-288–Gly-299. The span at Asp-344–Gln-356 shows a compositional bias: polar residues. 2 consecutive C2H2-type zinc fingers follow at residues Tyr-413–His-435 and Tyr-441–His-463. Positions Gly-491–Ala-501 are enriched in low complexity.

The protein belongs to the krueppel C2H2-type zinc-finger protein family.

It is found in the nucleus. Its function is as follows. May be involved in transcriptional regulation. In Homo sapiens (Human), this protein is Zinc finger and SCAN domain-containing protein 18 (ZSCAN18).